The primary structure comprises 137 residues: Small ribosomal subunit protein uS12 (137 aa).

Disordered stretches follow at residues 1-21 (MPTI…KSKS) and 33-57 (KVQT…TPRK). The residue at position 102 (Asp102) is a 3-methylthioaspartic acid.

It belongs to the universal ribosomal protein uS12 family. As to quaternary structure, part of the 30S ribosomal subunit. Contacts proteins S8 and S17. May interact with IF1 in the 30S initiation complex.

With S4 and S5 plays an important role in translational accuracy. Its function is as follows. Interacts with and stabilizes bases of the 16S rRNA that are involved in tRNA selection in the A site and with the mRNA backbone. Located at the interface of the 30S and 50S subunits, it traverses the body of the 30S subunit contacting proteins on the other side and probably holding the rRNA structure together. The combined cluster of proteins S8, S12 and S17 appears to hold together the shoulder and platform of the 30S subunit. This is Small ribosomal subunit protein uS12 from Streptococcus pneumoniae (strain ATCC 700669 / Spain 23F-1).